Consider the following 2670-residue polypeptide: Inositol 1,4,5-trisphosphate-gated calcium channel ITPR3 (2670 aa).

The Cytoplasmic segment spans residues 1-2201; the sequence is MNEMSSFLHI…LIYWFSRRMT (2201 aa). MIR domains are found at residues 113–173, 174–224, 232–288, 295–372, and 378–434; these read GDVV…LRSN, GDNV…INLF, EEVL…VEVV, GGAG…LDPT, and DSFV…IVSV. 1D-myo-inositol 1,4,5-trisphosphate-binding residues include Arg266, Thr268, Leu269, and Arg270. Positions 321–344 are disordered; it reads PSYKGDVSDPKAAGPGAQSRTGRR. 1D-myo-inositol 1,4,5-trisphosphate-binding residues include Arg503, Lys507, Arg510, Tyr567, Arg568, and Lys569. Residue Arg743 coordinates Ca(2+). A phosphoserine mark is found at Ser916 and Ser934. Ca(2+) is bound by residues Glu1122 and Glu1125. The span at 1134-1153 shows a compositional bias: basic and acidic residues; it reads VKGEEGEAGASKDKKERPSD. 2 disordered regions span residues 1134-1164 and 1807-1849; these read VKGE…HGEK and NMSD…GLHR. A phosphoserine mark is found at Ser1813, Ser1832, and Ser1834. Residues 1831-1842 are compositionally biased toward low complexity; the sequence is SSFSMPSSSRYS. Positions 1881 and 1945 each coordinate Ca(2+). 3 residues coordinate ATP: Ala1995, Glu2148, and Lys2151. A helical transmembrane segment spans residues 2202-2222; the sequence is LWGSISFNLAVFINIIIAFFY. The Extracellular portion of the chain corresponds to 2223 to 2233; it reads PYVEGASTGVL. The chain crosses the membrane as a helical span at residues 2234–2254; it reads GSPLISLLFWILICFSIAALF. Over 2255–2263 the chain is Cytoplasmic; that stretch reads TKHYSVRPL. The chain crosses the membrane as a helical span at residues 2264 to 2284; that stretch reads IVALVLRSIYYLGIGPTLNIL. At 2285 to 2324 the chain is on the extracellular side; that stretch reads GALNLTNKIVFVVSFVGNRGTFIRGYKAMVMDMEFLYHVG. A helical membrane pass occupies residues 2325–2345; that stretch reads YILTSVLGLFAHELFYSILLF. Residues 2346–2367 are Cytoplasmic-facing; that stretch reads DLIYREETLFNVIKSVTRNGRS. Residues 2368–2388 traverse the membrane as a helical segment; it reads ILLTALLALILVYLFSIVGFL. Residues 2389 to 2495 lie on the Extracellular side of the membrane; that stretch reads FLKDDFILEV…ESLFPARVVY (107 aa). An intrachain disulfide couples Cys2454 to Cys2460. The chain crosses the membrane as a helical span at residues 2496–2516; that stretch reads DLLFFFIVIIIVLNLIFGVII. Over 2517 to 2670 the chain is Cytoplasmic; it reads DTFADLRSEK…FVDVQNCMSR (154 aa). Residues Cys2537 and Phe2538 each contribute to the ATP site. Position 2537 (Cys2537) interacts with Zn(2+). Residues Cys2540 and His2557 each contribute to the Zn(2+) site. Lys2559, His2562, Asn2563, and Met2564 together coordinate ATP. Residue His2562 participates in Zn(2+) binding. Thr2580 contributes to the Ca(2+) binding site. Residues Ser2608 and Ser2669 each carry the phosphoserine modification.

This sequence belongs to the InsP3 receptor family. In terms of assembly, homotetramer. Homodimer. Interacts with TRPC1 and TRPC3. Interacts with TRPC4. Interacts with TRPV4. Interacts with SIGMAR1. Interacts with AKT1 and PML. Interacts with IRAG2 (via coiled-coil domain). Interacts with CABP1. Interacts with TMBIM4/LFG4. Interacts with CEMIP. Interacts with TESPA1. Interacts with TMEM203. Interacts with BOK; regulates ITPR3 expression. Interacts with BCL2L10. Interacts with CHGA and CHGB. In terms of processing, phosphorylated by AKT1 on serine and/or threonine residues.

Its subcellular location is the endoplasmic reticulum membrane. It is found in the cytoplasmic vesicle. The protein localises to the secretory vesicle membrane. The enzyme catalyses Ca(2+)(in) = Ca(2+)(out). Inositol 1,4,5-trisphosphate-gated calcium channel is regulated by cytosolic calcium in a biphasic manner. At low concentrations, cytosolic calcium binds at a high-affinity juxtamembrane domain (JD) calcium binding site, allowing ITPR3 to activate by escaping a low-energy resting state through an ensemble of preactivated states. At high cytosolic calcium concentrations, ITPR3 preferentially enters an inhibited state stabilized by calcium binding at a second, low-affinity cytoplasmic domain (CD) calcium binding site. Its function is as follows. Inositol 1,4,5-trisphosphate-gated calcium channel that, upon 1D-myo-inositol 1,4,5-trisphosphate binding, transports calcium from the endoplasmic reticulum lumen to cytoplasm, thus releasing the intracellular calcium and therefore participates in cellular calcium ion homeostasis. 11D-myo-inositol 1,4,5-trisphosphate binds to the ligand-free channel without altering its global conformation, yielding the low-energy resting state, then progresses through resting-to preactivated transitions to the higher energy preactivated state, which increases affinity for calcium, promoting binding of the low basal cytosolic calcium at the juxtamembrane domain (JD) site, favoring the transition through the ensemble of high-energy intermediate states along the trajectory to the fully-open activated state. Upon opening, releases calcium in the cytosol where it can bind to the low-affinity cytoplasmic domain (CD) site and stabilizes the inhibited state to terminate calcium release. The polypeptide is Inositol 1,4,5-trisphosphate-gated calcium channel ITPR3 (Rattus norvegicus (Rat)).